The sequence spans 1030 residues: Tricorn protease (1030 aa).

The six-bladed beta propeller stretch occupies residues methionine 1–proline 270. The segment at arginine 93–arginine 94 is binds the substrate's C-terminus. The segment at leucine 286 to alanine 635 is seven-bladed beta propeller. Residues asparagine 641 to glycine 712 are C-1. The Charge relay system role is filled by histidine 706. Residues arginine 721–aspartate 816 are PDZ-like. The segment at arginine 817 to lysine 1022 is C-2. Glycine 877–glycine 879 is a binding site for substrate. The active-site Nucleophile is serine 926. Glycine 954–serine 956 is a substrate binding site. Glutamate 984 functions as the Charge relay system in the catalytic mechanism.

The protein belongs to the peptidase S41B family. As to quaternary structure, part of the tricorn proteolytic complex.

It is found in the cytoplasm. In terms of biological role, tricorn degrades oligopeptides in a sequential manner. In Thermoplasma volcanium (strain ATCC 51530 / DSM 4299 / JCM 9571 / NBRC 15438 / GSS1), this protein is Tricorn protease (tri).